The primary structure comprises 165 residues: Chorismate pyruvate-lyase (165 aa).

Substrate is bound by residues methionine 35, arginine 77, leucine 115, and glutamate 156.

Belongs to the UbiC family. In terms of assembly, monomer.

The protein resides in the cytoplasm. It catalyses the reaction chorismate = 4-hydroxybenzoate + pyruvate. It functions in the pathway cofactor biosynthesis; ubiquinone biosynthesis. Its function is as follows. Removes the pyruvyl group from chorismate, with concomitant aromatization of the ring, to provide 4-hydroxybenzoate (4HB) for the ubiquinone pathway. This is Chorismate pyruvate-lyase from Escherichia coli O157:H7.